A 53-amino-acid chain; its full sequence is Small polypeptide DEVIL 7 (53 aa).

The segment covering 1-16 (MREKYTKEEAVKNWEK) has biased composition (basic and acidic residues). A disordered region spans residues 1-28 (MREKYTKEEAVKNWEKKKNKPSSPKGVG). The required for DVL/RTFL small polypeptide activity stretch occupies residues 22-53 (SSPKGVGEFLKKKKGRFYIIGKCITMLLCSHK). The chain crosses the membrane as a helical span at residues 30-46 (FLKKKKGRFYIIGKCIT).

Belongs to the DVL/RTFL small polypeptides family.

It localises to the cell membrane. In terms of biological role, small polypeptide acting as a regulatory molecule which coordinates cellular responses required for differentiation, growth and development, probably by restricting polar cell proliferation in lateral organs and coordinating socket cell recruitment and differentiation at trichome sites. The sequence is that of Small polypeptide DEVIL 7 from Arabidopsis thaliana (Mouse-ear cress).